Here is a 105-residue protein sequence, read N- to C-terminus: Thioredoxin (105 aa).

Positions A1–Q105 constitute a Thioredoxin domain. The cysteines at positions 29 and 32 are disulfide-linked.

Its function is as follows. Participates in various redox reactions through the reversible oxidation of its active center dithiol to a disulfide and catalyzes dithiol-disulfide exchange reactions. This Alicyclobacillus acidocaldarius subsp. acidocaldarius (Bacillus acidocaldarius) protein is Thioredoxin (trxA).